Consider the following 304-residue polypeptide: Beta-lactamase AER-1 (304 aa).

Residues 1-37 (MYVLSVEKPTLRNKFAAGIGVVLVCVVASFIPTPVFA) form the signal peptide. The Acyl-ester intermediate role is filled by Ser-83. Cys-90 and Cys-137 form a disulfide bridge. The disordered stretch occupies residues 173–195 (ETQLDRKEPELNEGTPGDVRDTT). 248-250 (KTG) serves as a coordination point for substrate.

Belongs to the class-A beta-lactamase family.

The enzyme catalyses a beta-lactam + H2O = a substituted beta-amino acid. In terms of biological role, hydrolyzes carbenicillin. Methicillin and oxacillin are weakly hydrolyzed. The chain is Beta-lactamase AER-1 (aer1) from Aeromonas hydrophila.